The following is a 932-amino-acid chain: Transcription initiation factor TFIID subunit 3 (932 aa).

4 disordered regions span residues 130 to 201 (PIVS…LSTK), 213 to 347 (REPL…PSAM), 403 to 465 (REPD…DNSW), and 480 to 579 (LGAP…PWRE). Residues 158-171 (LEEDDEMEEEEVIN) are compositionally biased toward acidic residues. 4 positions are modified to phosphoserine: Ser-183, Ser-199, Ser-229, and Ser-243. Lys-266 is subject to N6-acetyllysine. A compositionally biased stretch (polar residues) spans 266–283 (KSFTPKTKTKASSPGQKT). Ser-291, Ser-297, and Ser-301 each carry phosphoserine. Positions 408 to 423 (FEFSSGSESEGDTFTS) are enriched in low complexity. Residues 436–446 (KASTSSNNFTK) show a composition bias toward polar residues. Residues 447–461 (SLATPLPLSSGTSSS) show a composition bias toward low complexity. Thr-502 carries the post-translational modification Phosphothreonine. The span at 505 to 515 (PLHKGYEEKAK) shows a compositional bias: basic and acidic residues. Residues 524–538 (KKLKKELKTKLKKKE) are compositionally biased toward basic residues. The span at 539–579 (KQRDRERERERNKERSKEKDKMREREKEKEAGKELKYPWRE) shows a compositional bias: basic and acidic residues. Lys-582 is covalently cross-linked (Glycyl lysine isopeptide (Lys-Gly) (interchain with G-Cter in SUMO2)). A disordered region spans residues 607–657 (KDGIVRREREKHKDKKKDRERSKREKDKRERERLKEKNREDKIKAPPTQLV). Basic and acidic residues predominate over residues 623–650 (KDRERSKREKDKRERERLKEKNREDKIK). A Phosphoserine modification is found at Ser-669. The disordered stretch occupies residues 681–746 (AFSPMLPEKL…EKEKEKHKHE (66 aa)). Residues 689–702 (KLFEEKEKPKEKER) show a composition bias toward basic and acidic residues. Basic residues predominate over residues 703 to 714 (KKDKKEKKKKKE). The span at 715 to 740 (KEKEKEKKEREREKERREREKREKEK) shows a compositional bias: basic and acidic residues. A Glycyl lysine isopeptide (Lys-Gly) (interchain with G-Cter in SUMO2) cross-link involves residue Lys-749. At Ser-758 the chain carries Phosphoserine. Lys-779 carries the post-translational modification N6-acetyllysine. The segment at 867–917 (IWICPGCNKPDDGSPMIGCDDCDDWYHWPCVGIMAAPPEEMQWFCPKCANK) adopts a PHD-type zinc-finger fold.

It belongs to the TAF3 family. As to quaternary structure, component of the TFIID basal transcription factor complex, composed of TATA-box-binding protein TBP, and a number of TBP-associated factors (TAFs), including TAF1, TAF2, TAF3, TAF4, TAF5, TAF6, TAF7, TAF8, TAF9, TAF10, TAF11, TAF12 and TAF13. Interacts with TAF10 via histone fold. Interacts with TAF13, TBP, SAP130 and GCN5L2. Interacts with TBPL2.

The protein resides in the nucleus. The TFIID basal transcription factor complex plays a major role in the initiation of RNA polymerase II (Pol II)-dependent transcription. TFIID recognizes and binds promoters with or without a TATA box via its subunit TBP, a TATA-box-binding protein, and promotes assembly of the pre-initiation complex (PIC). The TFIID complex consists of TBP and TBP-associated factors (TAFs), including TAF1, TAF2, TAF3, TAF4, TAF5, TAF6, TAF7, TAF8, TAF9, TAF10, TAF11, TAF12 and TAF13. The TFIID complex structure can be divided into 3 modules TFIID-A, TFIID-B, and TFIID-C. TAF3 forms the TFIID-A module together with TAF5 and TBP. Required in complex with TBPL2 for the differentiation of myoblasts into myocytes. The TAF3-TBPL2 complex replaces TFIID at specific promoters at an early stage in the differentiation process. The chain is Transcription initiation factor TFIID subunit 3 (Taf3) from Mus musculus (Mouse).